Here is a 372-residue protein sequence, read N- to C-terminus: Aminomethyltransferase (372 aa).

It belongs to the GcvT family. In terms of assembly, the glycine cleavage system is composed of four proteins: P, T, L and H.

It carries out the reaction N(6)-[(R)-S(8)-aminomethyldihydrolipoyl]-L-lysyl-[protein] + (6S)-5,6,7,8-tetrahydrofolate = N(6)-[(R)-dihydrolipoyl]-L-lysyl-[protein] + (6R)-5,10-methylene-5,6,7,8-tetrahydrofolate + NH4(+). The glycine cleavage system catalyzes the degradation of glycine. The polypeptide is Aminomethyltransferase (Burkholderia ambifaria (strain MC40-6)).